A 232-amino-acid chain; its full sequence is Octanoyltransferase (232 aa).

The BPL/LPL catalytic domain occupies 43–231 (DQTPNYFLFV…HFTQLFDCTV (189 aa)). Substrate contacts are provided by residues 88–95 (RGGDITYH), 160–162 (ALG), and 173–175 (GFA). Cysteine 191 (acyl-thioester intermediate) is an active-site residue.

Belongs to the LipB family.

The protein resides in the cytoplasm. The catalysed reaction is octanoyl-[ACP] + L-lysyl-[protein] = N(6)-octanoyl-L-lysyl-[protein] + holo-[ACP] + H(+). It functions in the pathway protein modification; protein lipoylation via endogenous pathway; protein N(6)-(lipoyl)lysine from octanoyl-[acyl-carrier-protein]: step 1/2. Catalyzes the transfer of endogenously produced octanoic acid from octanoyl-acyl-carrier-protein onto the lipoyl domains of lipoate-dependent enzymes. Lipoyl-ACP can also act as a substrate although octanoyl-ACP is likely to be the physiological substrate. The protein is Octanoyltransferase of Flavobacterium psychrophilum (strain ATCC 49511 / DSM 21280 / CIP 103535 / JIP02/86).